The chain runs to 262 residues: Acyl-coenzyme A diphosphatase FITM2 (262 aa).

Residues 1 to 23 (MEHLERCEWLLRGTLVRAAVRRY) are Cytoplasmic-facing. The helical transmembrane segment at 24-44 (LPWALVASMLAGSLLKELSPL) threads the bilayer. Over 45–57 (PESYLSNKRNVLN) the chain is Lumenal. The chain crosses the membrane as a helical span at residues 58 to 78 (VYFVKVAWAWTFCLLLPFIAL). Residues 79–93 (TNYHLTGKAGLVLRR) are Cytoplasmic-facing. Residues 94-114 (LSTLLVGTAIWYICTSIFSNI) traverse the membrane as a helical segment. At 115–145 (EHYTGSCYQSPALEGVRKEHQSKQQCHQEGG) the chain is on the lumenal side. The helical transmembrane segment at 146 to 166 (FWHGFDISGHSFLLTFCALMI) threads the bilayer. His-155 is an active-site residue. At 167 to 190 (VEEMSVLHEVKTDRSHCLHTAITT) the chain is on the cytoplasmic side. Residues 191–211 (LVVALGILTFIWVLMFLCTAV) traverse the membrane as a helical segment. At 212–218 (YFHNLSQ) the chain is on the lumenal side. The active site involves His-214. Residues 219-239 (KVFGTLFGLLSWYGTYGFWYP) traverse the membrane as a helical segment. The Cytoplasmic portion of the chain corresponds to 240 to 262 (KAFSPGLPPQSCSLNLKQDSYKK).

It belongs to the FIT family. FIT2 subfamily. Widely expressed.

The protein resides in the endoplasmic reticulum membrane. The enzyme catalyses an acyl-CoA + H2O = an acyl-4'-phosphopantetheine + adenosine 3',5'-bisphosphate + 2 H(+). The catalysed reaction is (9Z)-octadecenoyl-CoA + H2O = S-(9Z-octadecenoyl)-4'-phosphopantetheine + adenosine 3',5'-bisphosphate + 2 H(+). It carries out the reaction (5Z,8Z,11Z,14Z)-eicosatetraenoyl-CoA + H2O = S-(5Z,8Z,11Z,14Z-eicosatetraenoyl)-4'-phosphopantetheine + adenosine 3',5'-bisphosphate + 2 H(+). It catalyses the reaction hexadecanoyl-CoA + H2O = S-hexadecanoyl-4'-phosphopantetheine + adenosine 3',5'-bisphosphate + 2 H(+). Functionally, fatty acyl-coenzyme A (CoA) diphosphatase that hydrolyzes fatty acyl-CoA to yield acyl-4'-phosphopantetheine and adenosine 3',5'-bisphosphate. Preferentially hydrolyzes unsaturated long-chain acyl-CoA substrates such as oleoyl-CoA/(9Z)-octadecenoyl-CoA and arachidonoyl-CoA/(5Z,8Z,11Z,14Z)-eicosatetraenoyl-CoA in the endoplasmic reticulum (ER) lumen. This catalytic activity is required for maintaining ER structure and for lipid droplets (LDs) biogenesis, which are lipid storage organelles involved in maintaining lipid and energy homeostasis. Directly binds to diacylglycerol (DAGs) and triacylglycerol, which is also important for LD biogenesis. May support directional budding of nacent LDs from the ER into the cytosol by reducing DAG levels at sites of LD formation. Plays a role in the regulation of cell morphology and cytoskeletal organization. This chain is Acyl-coenzyme A diphosphatase FITM2, found in Homo sapiens (Human).